A 100-amino-acid chain; its full sequence is Aspartyl/glutamyl-tRNA(Asn/Gln) amidotransferase subunit C (100 aa).

The protein belongs to the GatC family. In terms of assembly, heterotrimer of A, B and C subunits.

It catalyses the reaction L-glutamyl-tRNA(Gln) + L-glutamine + ATP + H2O = L-glutaminyl-tRNA(Gln) + L-glutamate + ADP + phosphate + H(+). The catalysed reaction is L-aspartyl-tRNA(Asn) + L-glutamine + ATP + H2O = L-asparaginyl-tRNA(Asn) + L-glutamate + ADP + phosphate + 2 H(+). Functionally, allows the formation of correctly charged Asn-tRNA(Asn) or Gln-tRNA(Gln) through the transamidation of misacylated Asp-tRNA(Asn) or Glu-tRNA(Gln) in organisms which lack either or both of asparaginyl-tRNA or glutaminyl-tRNA synthetases. The reaction takes place in the presence of glutamine and ATP through an activated phospho-Asp-tRNA(Asn) or phospho-Glu-tRNA(Gln). This is Aspartyl/glutamyl-tRNA(Asn/Gln) amidotransferase subunit C from Rickettsia canadensis (strain McKiel).